Consider the following 92-residue polypeptide: Small ribosomal subunit protein bS20 (92 aa).

The tract at residues 1–23 (MANTTSAKKATRKIARRTDVNKA) is disordered.

The protein belongs to the bacterial ribosomal protein bS20 family.

Its function is as follows. Binds directly to 16S ribosomal RNA. The chain is Small ribosomal subunit protein bS20 from Rhizobium etli (strain CIAT 652).